Consider the following 2080-residue polypeptide: Fatty acid synthase beta subunit TOXC (2080 aa).

The 228-residue stretch at 170–397 (GRYFDELREL…LYRFNLLLRK (228 aa)) folds into the Starter acyltransferase (SAT) domain. S276 acts as the For acetyltransferase activity in catalysis. The enoyl reductase (ER) domain stretch occupies residues 585–830 (SRLLGLPPIM…VIVETEGLND (246 aa)). Residues 1155–1644 (GKSRSWRHAI…LPNQKLEVKL (490 aa)) form a dehydratase (DH) domain region. In terms of domain architecture, MaoC-like spans 1544-1662 (SVDFEDPVSV…MIRLHIEARA (119 aa)). One can recognise a Malonyl-CoA:ACP transacylase (MAT) domain in the interval 1682 to 2046 (TYVFTGQGSQ…FQYVYDLTGS (365 aa)). Positions 1683–2046 (YVFTGQGSQE…FQYVYDLTGS (364 aa)) are malonyl/palmitoyl transferase (MT/PT) domain. S1828 functions as the For malonyltransferase activity in the catalytic mechanism.

Belongs to the fungal fatty acid synthetase subunit beta family.

The catalysed reaction is acetyl-CoA + n malonyl-CoA + 2n NADPH + 4n H(+) = a long-chain-acyl-CoA + n CoA + n CO2 + 2n NADP(+).. It catalyses the reaction holo-[ACP] + acetyl-CoA = acetyl-[ACP] + CoA. The enzyme catalyses holo-[ACP] + malonyl-CoA = malonyl-[ACP] + CoA. It carries out the reaction a (3R)-hydroxyacyl-[ACP] = a (2E)-enoyl-[ACP] + H2O. The catalysed reaction is a 2,3-saturated acyl-[ACP] + NAD(+) = a (2E)-enoyl-[ACP] + NADH + H(+). It catalyses the reaction (9Z)-octadecenoyl-[ACP] + H2O = (9Z)-octadecenoate + holo-[ACP] + H(+). It functions in the pathway mycotoxin biosynthesis; HC-toxin biosynthesis. Its function is as follows. Fatty acid synthase beta subunit, part of the diffuse TOX2 gene cluster that mediates the biosynthesis of the HC-toxin, cyclic tetrapeptide of structure cyclo(D-Pro-L-Ala-D-Ala-L-Aeo), where Aeo stands for 2-amino-9,10-epoxi-8-oxodecanoic acid. HC-toxin is a determinant of specificity and virulence in the interaction between the producing fungus and its host, maize. TOXC contribute to the synthesis of the decanoic backbone of 2-amino-9,10-epoxi-8-oxodecanoic acid, an essential precursor for the production of the major forms of HC-toxin by the non-ribosomal peptide synthetase HTS1. The sequence is that of Fatty acid synthase beta subunit TOXC from Cochliobolus carbonum (Maize leaf spot fungus).